The primary structure comprises 349 residues: N-formyl peptide receptor 3 (349 aa).

Topologically, residues 1-27 (METNFSIPLNETEEVLPEPAGHTVLWI) are extracellular. N-linked (GlcNAc...) asparagine glycans are attached at residues Asn-4 and Asn-10. A helical membrane pass occupies residues 28–50 (FSLLVHGVTFVFGVLGNGLVIWV). Over 51–61 (AGFRMTRTVNT) the chain is Cytoplasmic. A helical transmembrane segment spans residues 62 to 83 (ICYLNLALADFSFSAILPFRMV). The Extracellular segment spans residues 84–100 (SVAMREKWPFGSFLCKL). Residues Cys-98 and Cys-176 are joined by a disulfide bond. Residues 101 to 121 (VHVMIDINLFVSVYLITIIAL) traverse the membrane as a helical segment. Topologically, residues 122-140 (DRCICVLHPAWAQNHRTMS) are cytoplasmic. A helical transmembrane segment spans residues 141 to 162 (LAKRVMTGLWILTIVLTLPNFI). At 163–205 (FWTTIRTTNGDTYCIFNFAFWGDTAVERLNVFITMAKVFLILH) the chain is on the extracellular side. Residues 206 to 226 (FIIGFSMPMSIITVCYGIIAA) form a helical membrane-spanning segment. Residues 227-242 (KIHRNHMIKSSRPLRV) lie on the Cytoplasmic side of the membrane. The chain crosses the membrane as a helical span at residues 243-266 (FAAVVASFFICWFPYELIGILMAV). Over 267–286 (WLKEMLLNGKYKIILVLINP) the chain is Extracellular. The chain crosses the membrane as a helical span at residues 287–306 (TSSLAFFNSCLNPILYVFMG). At 307–349 (RNFQERLIRSLPTSLERALTEVPDSAQTSNTHTTSASPPEETE) the chain is on the cytoplasmic side. The tract at residues 327 to 349 (EVPDSAQTSNTHTTSASPPEETE) is disordered. The segment covering 331 to 343 (SAQTSNTHTTSAS) has biased composition (polar residues).

The protein belongs to the G-protein coupled receptor 1 family.

It is found in the cell membrane. Low affinity receptor for N-formyl-methionyl peptides, which are powerful neutrophils chemotactic factors. Binding of FMLP to the receptor causes activation of neutrophils. This response is mediated via a G-protein that activates a phosphatidylinositol-calcium second messenger system. The polypeptide is N-formyl peptide receptor 3 (FPR3) (Pan troglodytes (Chimpanzee)).